We begin with the raw amino-acid sequence, 298 residues long: Serine/threonine-protein kinase 1 (298 aa).

Residues F38–F276 enclose the Protein kinase domain. ATP-binding positions include F45–F53 and K65. The active-site Proton acceptor is the D152.

Belongs to the protein kinase superfamily. Ser/Thr protein kinase family.

It is found in the virion. The protein resides in the host cytoplasm. It catalyses the reaction L-seryl-[protein] + ATP = O-phospho-L-seryl-[protein] + ADP + H(+). The catalysed reaction is L-threonyl-[protein] + ATP = O-phospho-L-threonyl-[protein] + ADP + H(+). In terms of biological role, essential for viral replication. It may mediate the virus progression through DNA replication. This is Serine/threonine-protein kinase 1 from African swine fever virus (strain Badajoz 1971 Vero-adapted) (Ba71V).